The chain runs to 120 residues: Large ribosomal subunit protein bL20 (120 aa).

Belongs to the bacterial ribosomal protein bL20 family.

Its function is as follows. Binds directly to 23S ribosomal RNA and is necessary for the in vitro assembly process of the 50S ribosomal subunit. It is not involved in the protein synthesizing functions of that subunit. This Karelsulcia muelleri (strain GWSS) (Sulcia muelleri) protein is Large ribosomal subunit protein bL20.